The sequence spans 206 residues: uncharacterized protein (206 aa).

The first 22 residues, 1–22, serve as a signal peptide directing secretion; it reads MPKLRLIGLTLLALSATAVSHA. Positions 23-89 constitute an SH3b domain; that stretch reads EETRYVSDEL…IPLKQLSTEP (67 aa). Residues 169–191 form a helical membrane-spanning segment; that stretch reads IIMQWFMYGGGVLGLGLLLGLVL.

The protein to H.influenzae HI_1605.

It is found in the membrane. This is an uncharacterized protein from Escherichia coli O157:H7.